The primary structure comprises 269 residues: Auxin-responsive protein IAA26 (269 aa).

A compositionally biased stretch (basic and acidic residues) spans 25–40 (YQEDKNNTDQEKKLEL). Disordered regions lie at residues 25-55 (YQED…HSAI) and 76-146 (CFNG…KQVE). An EAR-like (transcriptional repression) motif is present at residues 38 to 42 (LELRL). Composition is skewed to polar residues over residues 80-93 (NHFS…SVPH) and 117-136 (LAST…GQIN). A compositionally biased stretch (basic and acidic residues) spans 137-146 (KSDDGEKQVE). Positions 151 to 250 (GMFVKINMDG…SVKRLRVIKS (100 aa)) constitute a PB1 domain.

This sequence belongs to the Aux/IAA family. As to quaternary structure, homodimers and heterodimers. Interacts with phytochrome A. Interacts with TPL.

It localises to the nucleus. Functionally, aux/IAA proteins are short-lived transcriptional factors that function as repressors of early auxin response genes at low auxin concentrations. Repression is thought to result from the interaction with auxin response factors (ARFs), proteins that bind to the auxin-responsive promoter element (AuxRE). Formation of heterodimers with ARF proteins may alter their ability to modulate early auxin response genes expression. This Arabidopsis thaliana (Mouse-ear cress) protein is Auxin-responsive protein IAA26 (IAA26).